Consider the following 207-residue polypeptide: C-type lectin domain family 2 member D (207 aa).

The Cytoplasmic segment spans residues 1-41; the sequence is MCVTKASLPMLSPTGSPQEVEVGKILQGKRHGTISPESCAK. 2 positions are modified to phosphoserine: Ser-7 and Ser-12. The chain crosses the membrane as a helical; Signal-anchor for type II membrane protein span at residues 42 to 62; the sequence is LYCYYGVIMVLTVAVIALSVA. Residues 63 to 207 lie on the Extracellular side of the membrane; the sequence is LSATKTEQIP…LHCQTPFFPS (145 aa). A disulfide bridge links Cys-80 with Cys-91. Residues 87–202 enclose the C-type lectin domain; sequence VENKCFYFSE…LNSYSLHCQT (116 aa). Residue Asn-100 is glycosylated (N-linked (GlcNAc...) asparagine).

In terms of assembly, homodimer; disulfide-linked. In terms of processing, N-glycosylated. As to expression, detected in fetal heart, brain, lung, chondrocytes, perichondrium and osteoblasts, and in adult splenocytes, thymocytes, lymph-node cells, osteoblasts, growth plate chondrocytes and skeletal muscle overlying the bone (at protein level). Ubiquitous. Detected in thymus, bone marrow, lung, gut, heart, skeletal muscle, ovary, spleen, ileum, liver and kidney.

The protein localises to the cell membrane. Receptor for KLRB1B that protects target cells against natural killer cell-mediated lysis. Inhibits osteoclast formation. Binds high molecular weight sulfated glycosaminoglycans. This is C-type lectin domain family 2 member D (Clec2d) from Mus musculus (Mouse).